A 509-amino-acid polypeptide reads, in one-letter code: ATP synthase subunit alpha (509 aa).

169–176 (GDRQTGKT) contacts ATP.

The protein belongs to the ATPase alpha/beta chains family. As to quaternary structure, F-type ATPases have 2 components, CF(1) - the catalytic core - and CF(0) - the membrane proton channel. CF(1) has five subunits: alpha(3), beta(3), gamma(1), delta(1), epsilon(1). CF(0) has three main subunits: a(1), b(2) and c(9-12). The alpha and beta chains form an alternating ring which encloses part of the gamma chain. CF(1) is attached to CF(0) by a central stalk formed by the gamma and epsilon chains, while a peripheral stalk is formed by the delta and b chains.

It is found in the cell inner membrane. The catalysed reaction is ATP + H2O + 4 H(+)(in) = ADP + phosphate + 5 H(+)(out). In terms of biological role, produces ATP from ADP in the presence of a proton gradient across the membrane. The alpha chain is a regulatory subunit. This chain is ATP synthase subunit alpha, found in Rhizobium leguminosarum bv. trifolii (strain WSM2304).